Here is a 557-residue protein sequence, read N- to C-terminus: (-)-germacrene D synthase (557 aa).

The Mg(2+) site is built by D310, D314, and E462. Positions 310–314 (DDIYD) match the DDXXD motif motif.

The protein belongs to the terpene synthase family. Tpsa subfamily. Mg(2+) serves as cofactor. As to expression, expressed in flowers. Detected in stems, young leaves and tendrils.

The protein localises to the cytoplasm. The enzyme catalyses (2E,6E)-farnesyl diphosphate + H2O = (1E,4S,5E,7R)-germacra-1(10),5-dien-11-ol + diphosphate. It carries out the reaction (2E,6E)-farnesyl diphosphate = (-)-germacrene D + diphosphate. Its pathway is secondary metabolite biosynthesis; terpenoid biosynthesis. Its function is as follows. Involved in the biosynthesis of germacrene D. Can use farnesyl diphosphate as substrate, but not geranyl diphosphate or geranylgeranyl diphosphate. Produces mainly (-)-germacrene D along with gamma-cadinene. The protein is (-)-germacrene D synthase of Vitis vinifera (Grape).